Consider the following 288-residue polypeptide: Phytanoyl-CoA dioxygenase domain-containing protein 1 homolog (288 aa).

2-oxoglutarate contacts are provided by residues Lys95, Met134, 149–151 (HVD), and Trp167. 2 residues coordinate Fe cation: His149 and Asp151. Fe cation is bound at residue His242. Residues Ser244 and Arg253 each contribute to the 2-oxoglutarate site.

Belongs to the PhyH family. PHYHD1 subfamily. It depends on Fe cation as a cofactor.

Functionally, has alpha-ketoglutarate-dependent dioxygenase activity. Does not show detectable activity towards fatty acid CoA thioesters. Is not expected to be active with phytanoyl CoA. This chain is Phytanoyl-CoA dioxygenase domain-containing protein 1 homolog, found in Caenorhabditis elegans.